The primary structure comprises 259 residues: FAD-linked sulfhydryl oxidase (259 aa).

Belongs to the baculoviridae p33 family. Homodimer.

It localises to the host cytoplasm. The protein localises to the host nucleus. The catalysed reaction is 2 R'C(R)SH + O2 = R'C(R)S-S(R)CR' + H2O2. Its function is as follows. Functional FAD-linked sulfhydryl oxidase that is required for infectious budded virion (BV) production and for the formation of enveloped occluded virion (ODV). In Lepidoptera (butterflies and moths), this protein is FAD-linked sulfhydryl oxidase (P33).